The chain runs to 291 residues: Bifunctional protein FolD (291 aa).

Residues 167–169 (GRS) and Ser-192 contribute to the NADP(+) site.

Belongs to the tetrahydrofolate dehydrogenase/cyclohydrolase family. Homodimer.

It catalyses the reaction (6R)-5,10-methylene-5,6,7,8-tetrahydrofolate + NADP(+) = (6R)-5,10-methenyltetrahydrofolate + NADPH. It carries out the reaction (6R)-5,10-methenyltetrahydrofolate + H2O = (6R)-10-formyltetrahydrofolate + H(+). It participates in one-carbon metabolism; tetrahydrofolate interconversion. Its function is as follows. Catalyzes the oxidation of 5,10-methylenetetrahydrofolate to 5,10-methenyltetrahydrofolate and then the hydrolysis of 5,10-methenyltetrahydrofolate to 10-formyltetrahydrofolate. This Leptospira biflexa serovar Patoc (strain Patoc 1 / Ames) protein is Bifunctional protein FolD.